Here is a 549-residue protein sequence, read N- to C-terminus: Lipase 4 (549 aa).

The first 15 residues, 1 to 15 (MKLALVLSLIVSVAA), serve as a signal peptide directing secretion. A disulfide bridge connects residues C75 and C112. S224 (acyl-ester intermediate) is an active-site residue. C283 and C292 are joined by a disulfide. E356 acts as the Charge relay system in catalysis. Residue N366 is glycosylated (N-linked (GlcNAc...) asparagine). H464 functions as the Charge relay system in the catalytic mechanism.

Belongs to the type-B carboxylesterase/lipase family.

The catalysed reaction is a triacylglycerol + H2O = a diacylglycerol + a fatty acid + H(+). This chain is Lipase 4 (LIP4), found in Diutina rugosa (Yeast).